Reading from the N-terminus, the 77-residue chain is Translation initiation factor IF-1, chloroplastic (77 aa).

In terms of domain architecture, S1-like spans 1–72 (MKKQNLIEME…TKGRITYRLR (72 aa)).

This sequence belongs to the IF-1 family. As to quaternary structure, component of the 30S ribosomal translation pre-initiation complex which assembles on the 30S ribosome in the order IF-2 and IF-3, IF-1 and N-formylmethionyl-tRNA(fMet); mRNA recruitment can occur at any time during PIC assembly.

The protein resides in the plastid. Its subcellular location is the chloroplast. In terms of biological role, one of the essential components for the initiation of protein synthesis. Stabilizes the binding of IF-2 and IF-3 on the 30S subunit to which N-formylmethionyl-tRNA(fMet) subsequently binds. Helps modulate mRNA selection, yielding the 30S pre-initiation complex (PIC). Upon addition of the 50S ribosomal subunit IF-1, IF-2 and IF-3 are released leaving the mature 70S translation initiation complex. The chain is Translation initiation factor IF-1, chloroplastic from Zygnema circumcarinatum (Green alga).